Reading from the N-terminus, the 899-residue chain is Translation initiation factor IF-2 (899 aa).

Disordered regions lie at residues 116–135, 170–189, and 262–306; these read AKAR…ARLQ, RGGG…EQKK, and DREI…ANKH. One can recognise a tr-type G domain in the interval 399-568; the sequence is TRPPVVTIMG…LIQSELMELK (170 aa). Residues 408-415 are G1; sequence GHVDHGKT. 408–415 provides a ligand contact to GTP; the sequence is GHVDHGKT. Residues 433–437 are G2; the sequence is GITQH. Positions 454–457 are G3; the sequence is DTPG. GTP contacts are provided by residues 454–458 and 508–511; these read DTPGH and NKMD. Residues 508–511 form a G4 region; sequence NKMD. Residues 544–546 are G5; the sequence is SAH.

The protein belongs to the TRAFAC class translation factor GTPase superfamily. Classic translation factor GTPase family. IF-2 subfamily.

It localises to the cytoplasm. Its function is as follows. One of the essential components for the initiation of protein synthesis. Protects formylmethionyl-tRNA from spontaneous hydrolysis and promotes its binding to the 30S ribosomal subunits. Also involved in the hydrolysis of GTP during the formation of the 70S ribosomal complex. The chain is Translation initiation factor IF-2 from Acinetobacter baumannii (strain AB307-0294).